The primary structure comprises 98 residues: Large ribosomal subunit protein uL23 (98 aa).

This sequence belongs to the universal ribosomal protein uL23 family. In terms of assembly, part of the 50S ribosomal subunit. Contacts protein L29, and trigger factor when it is bound to the ribosome.

Its function is as follows. One of the early assembly proteins it binds 23S rRNA. One of the proteins that surrounds the polypeptide exit tunnel on the outside of the ribosome. Forms the main docking site for trigger factor binding to the ribosome. This Saccharophagus degradans (strain 2-40 / ATCC 43961 / DSM 17024) protein is Large ribosomal subunit protein uL23.